The following is a 217-amino-acid chain: Translation initiation factor IF-3 (217 aa).

Residues 185–217 form a disordered region; that stretch reads YNLPETETTRIREENREKQKEKENTSKEGNKDA. Positions 191–217 are enriched in basic and acidic residues; the sequence is ETTRIREENREKQKEKENTSKEGNKDA.

Belongs to the IF-3 family. In terms of assembly, monomer.

It localises to the cytoplasm. Functionally, IF-3 binds to the 30S ribosomal subunit and shifts the equilibrium between 70S ribosomes and their 50S and 30S subunits in favor of the free subunits, thus enhancing the availability of 30S subunits on which protein synthesis initiation begins. The protein is Translation initiation factor IF-3 of Methylacidiphilum infernorum (isolate V4) (Methylokorus infernorum (strain V4)).